The primary structure comprises 92 residues: Small ribosomal subunit protein uS19 (92 aa).

The protein belongs to the universal ribosomal protein uS19 family.

In terms of biological role, protein S19 forms a complex with S13 that binds strongly to the 16S ribosomal RNA. The sequence is that of Small ribosomal subunit protein uS19 from Staphylococcus aureus (strain Mu3 / ATCC 700698).